The primary structure comprises 335 residues: V-set and immunoglobulin domain-containing protein 1 (335 aa).

Positions 1 to 21 (MFPTMLKIFPILATLAGHVHG) are cleaved as a signal peptide. The Ig-like V-type domain occupies 22–136 (VVVTVPEKTV…SQKSVIVNVL (115 aa)). Residues 22-233 (VVVTVPEKTV…DLTSMHSDGN (212 aa)) lie on the Extracellular side of the membrane. 2 cysteine pairs are disulfide-bonded: C43-C115 and C160-C210. In terms of domain architecture, Ig-like C2-type spans 139–226 (PSKPFCKIEG…GNSTCELDLT (88 aa)). Residues 234-254 (IVAGALIGAILAAVIICAIVW) form a helical membrane-spanning segment. Topologically, residues 255–335 (VLTKKAKKKK…QKEETAGSSF (81 aa)) are cytoplasmic. The tract at residues 266–335 (SSNEMQVMAQ…QKEETAGSSF (70 aa)) is disordered. Positions 268 to 306 (NEMQVMAQKQSNAEYAQVPNEENTPATAVLPSNATNEQP) are enriched in polar residues. Over residues 319–335 (NDEKHEVQKEETAGSSF) the composition is skewed to basic and acidic residues.

As to expression, expressed in thymocytes.

It is found in the membrane. This chain is V-set and immunoglobulin domain-containing protein 1 (VSIG1), found in Gallus gallus (Chicken).